The following is a 682-amino-acid chain: tRNA(Met) cytidine acetyltransferase TmcA (682 aa).

ATP contacts are provided by residues Q176, G198–M207, and R320. Residues Q357 to F534 enclose the N-acetyltransferase domain. Residues V462–V464 and E502 contribute to the acetyl-CoA site.

This sequence belongs to the RNA cytidine acetyltransferase family. TmcA subfamily.

The protein localises to the cytoplasm. It carries out the reaction cytidine(34) in elongator tRNA(Met) + acetyl-CoA + ATP + H2O = N(4)-acetylcytidine(34) in elongator tRNA(Met) + ADP + phosphate + CoA + H(+). Catalyzes the formation of N(4)-acetylcytidine (ac(4)C) at the wobble position of tRNA(Met), by using acetyl-CoA as an acetyl donor and ATP (or GTP). This is tRNA(Met) cytidine acetyltransferase TmcA from Photorhabdus asymbiotica subsp. asymbiotica (strain ATCC 43949 / 3105-77) (Xenorhabdus luminescens (strain 2)).